Reading from the N-terminus, the 422-residue chain is Glycine amidinotransferase, mitochondrial (422 aa).

Residues aspartate 253 and histidine 302 contribute to the active site. The active-site Amidino-cysteine intermediate is cysteine 406.

The protein belongs to the amidinotransferase family. As to quaternary structure, homodimer. As to expression, strongly expressed in neurons and glia of the brain, the lamina propria, submucosa and serosa of the small intestine, in oocytes and on the fringes of the pancreas. Not expressed in the retina, eye lens, heart or bulbus arteriosus. Expressed in the yolk syncytial layer in gastrula stage embryos, in the yolk syncytial layer and mature somites in early segmentation embryos and in the yolk syncytial layer and the liver of long-pec stage (48 hours post-fertilization) embryos.

It is found in the mitochondrion inner membrane. The catalysed reaction is L-arginine + glycine = guanidinoacetate + L-ornithine. The protein operates within amine and polyamine biosynthesis; creatine biosynthesis; creatine from L-arginine and glycine: step 1/2. In terms of biological role, catalyzes the biosynthesis of guanidinoacetate, the immediate precursor of creatine. Creatine plays a vital role in energy metabolism in muscle tissues. May play a role in embryonic and central nervous system development. The chain is Glycine amidinotransferase, mitochondrial from Danio rerio (Zebrafish).